Here is a 442-residue protein sequence, read N- to C-terminus: tRNA modification GTPase MnmE (442 aa).

Positions 24, 82, and 120 each coordinate (6S)-5-formyl-5,6,7,8-tetrahydrofolate. A TrmE-type G domain is found at 217–367; sequence GLHIVITGEP…LVSVIKEKVE (151 aa). GTP-binding positions include 227-232, 246-252, and 271-274; these read NVGKST, SEYVGTT, and DTAG. Mg(2+)-binding residues include Ser-231 and Thr-252. Lys-442 is a (6S)-5-formyl-5,6,7,8-tetrahydrofolate binding site.

This sequence belongs to the TRAFAC class TrmE-Era-EngA-EngB-Septin-like GTPase superfamily. TrmE GTPase family. As to quaternary structure, homodimer. Heterotetramer of two MnmE and two MnmG subunits. It depends on K(+) as a cofactor.

The protein localises to the cytoplasm. Exhibits a very high intrinsic GTPase hydrolysis rate. Involved in the addition of a carboxymethylaminomethyl (cmnm) group at the wobble position (U34) of certain tRNAs, forming tRNA-cmnm(5)s(2)U34. The sequence is that of tRNA modification GTPase MnmE from Wolbachia sp. subsp. Brugia malayi (strain TRS).